The following is a 398-amino-acid chain: 1-deoxy-D-xylulose 5-phosphate reductoisomerase (398 aa).

Residues Thr-10, Gly-11, Ser-12, Ile-13, Lys-37, Asn-38, and Asn-124 each contribute to the NADPH site. Lys-125 serves as a coordination point for 1-deoxy-D-xylulose 5-phosphate. NADPH is bound at residue Glu-126. Mn(2+) is bound at residue Asp-150. Residues Ser-151, Glu-152, Ser-186, and His-209 each contribute to the 1-deoxy-D-xylulose 5-phosphate site. Residue Glu-152 participates in Mn(2+) binding. An NADPH-binding site is contributed by Gly-215. The 1-deoxy-D-xylulose 5-phosphate site is built by Ser-222, Asn-227, Lys-228, and Glu-231. Residue Glu-231 coordinates Mn(2+).

The protein belongs to the DXR family. As to quaternary structure, homodimer. Mg(2+) serves as cofactor. Requires Mn(2+) as cofactor.

It catalyses the reaction 2-C-methyl-D-erythritol 4-phosphate + NADP(+) = 1-deoxy-D-xylulose 5-phosphate + NADPH + H(+). Its pathway is isoprenoid biosynthesis; isopentenyl diphosphate biosynthesis via DXP pathway; isopentenyl diphosphate from 1-deoxy-D-xylulose 5-phosphate: step 1/6. In terms of biological role, catalyzes the NADPH-dependent rearrangement and reduction of 1-deoxy-D-xylulose-5-phosphate (DXP) to 2-C-methyl-D-erythritol 4-phosphate (MEP). The chain is 1-deoxy-D-xylulose 5-phosphate reductoisomerase from Buchnera aphidicola subsp. Acyrthosiphon pisum (strain APS) (Acyrthosiphon pisum symbiotic bacterium).